A 142-amino-acid polypeptide reads, in one-letter code: MAAAAEGVLATRSDEPARDDAAVETAEEAKEPAEADITELCRDMFSKMATYLTGELTATSEDYKLLENMNKLTSLKYLEMKDIAINISRNLKDLNQKYAGLQPYLDQINVIEEQVAALEQAAYKLDAYSKKLEAKYKKLEKR.

Positions 1–33 (MAAAAEGVLATRSDEPARDDAAVETAEEAKEPA) are disordered. Alanine 2 is subject to N-acetylalanine. The span at 12 to 33 (RSDEPARDDAAVETAEEAKEPA) shows a compositional bias: basic and acidic residues. Residues 79 to 127 (EMKDIAINISRNLKDLNQKYAGLQPYLDQINVIEEQVAALEQAAYKLDA) are a coiled coil.

Belongs to the BLOC1S2 family. Component of the biogenesis of lysosome-related organelles complex 1 (BLOC-1) composed of BLOC1S1, BLOC1S2, BLOC1S3, BLOC1S4, BLOC1S5, BLOC1S6, DTNBP1/BLOC1S7 and SNAPIN/BLOC1S8. Octamer composed of one copy each BLOC1S1, BLOC1S2, BLOC1S3, BLOC1S4, BLOC1S5, BLOC1S6, DTNBP1/BLOC1S7 and SNAPIN/BLOC1S8. Interacts directly with BLOC1S1, BLOC1S3, BLOC1S4, BLOC1S5 and SNAPIN. The BLOC-1 complex associates with the AP-3 protein complex and membrane protein cargos. Component of the BLOC-one-related complex (BORC) which is composed of BLOC1S1, BLOC1S2, BORCS5, BORCS6, BORCS7, BORCS8, KXD1 and SNAPIN. Interacts with gamma-tubulin. Interacts with IFT57. As to expression, isoform 1 and isoform 2 are widely expressed. Expressed in various malignant tumor tissues (at protein level).

It is found in the cytoplasm. The protein resides in the cytoskeleton. Its subcellular location is the microtubule organizing center. The protein localises to the centrosome. It localises to the lysosome membrane. Its function is as follows. Component of the BLOC-1 complex, a complex that is required for normal biogenesis of lysosome-related organelles (LRO), such as platelet dense granules and melanosomes. In concert with the AP-3 complex, the BLOC-1 complex is required to target membrane protein cargos into vesicles assembled at cell bodies for delivery into neurites and nerve terminals. The BLOC-1 complex, in association with SNARE proteins, is also proposed to be involved in neurite extension. As part of the BORC complex may play a role in lysosomes movement and localization at the cell periphery. Associated with the cytosolic face of lysosomes, the BORC complex may recruit ARL8B and couple lysosomes to microtubule plus-end-directed kinesin motor. May play a role in cell proliferation. This is Biogenesis of lysosome-related organelles complex 1 subunit 2 (BLOC1S2) from Homo sapiens (Human).